The sequence spans 366 residues: Chorismate synthase (366 aa).

The NADP(+) site is built by Arg48 and Arg54. FMN contacts are provided by residues Arg125–Ser127, Asn238–Ala239, Gly278, Lys293–Ser297, and Arg319.

The protein belongs to the chorismate synthase family. In terms of assembly, homotetramer. Requires FMNH2 as cofactor.

It catalyses the reaction 5-O-(1-carboxyvinyl)-3-phosphoshikimate = chorismate + phosphate. Its pathway is metabolic intermediate biosynthesis; chorismate biosynthesis; chorismate from D-erythrose 4-phosphate and phosphoenolpyruvate: step 7/7. Functionally, catalyzes the anti-1,4-elimination of the C-3 phosphate and the C-6 proR hydrogen from 5-enolpyruvylshikimate-3-phosphate (EPSP) to yield chorismate, which is the branch point compound that serves as the starting substrate for the three terminal pathways of aromatic amino acid biosynthesis. This reaction introduces a second double bond into the aromatic ring system. The sequence is that of Chorismate synthase from Neisseria meningitidis serogroup B (strain ATCC BAA-335 / MC58).